The primary structure comprises 497 residues: ATP synthase subunit alpha, chloroplastic (497 aa).

170 to 177 (GDRQTGKT) is a binding site for ATP.

The protein belongs to the ATPase alpha/beta chains family. As to quaternary structure, F-type ATPases have 2 components, CF(1) - the catalytic core - and CF(0) - the membrane proton channel. CF(1) has five subunits: alpha(3), beta(3), gamma(1), delta(1), epsilon(1). CF(0) has four main subunits: a, b, b' and c.

It localises to the plastid. It is found in the chloroplast thylakoid membrane. It carries out the reaction ATP + H2O + 4 H(+)(in) = ADP + phosphate + 5 H(+)(out). In terms of biological role, produces ATP from ADP in the presence of a proton gradient across the membrane. The alpha chain is a regulatory subunit. The protein is ATP synthase subunit alpha, chloroplastic of Bigelowiella natans (Pedinomonas minutissima).